The following is a 230-amino-acid chain: Ribonuclease 3 (230 aa).

Residues 5–127 (HEHLARKLGI…ILGAVLRDQG (123 aa)) form the RNase III domain. Glu-40 contributes to the Mg(2+) binding site. Asp-44 is a catalytic residue. The Mg(2+) site is built by Asp-113 and Glu-116. The active site involves Glu-116. The DRBM domain maps to 154-224 (DPKTRLQELM…AENMLSRLSD (71 aa)). Residues 202-230 (GEGSSRKKAEQQAAENMLSRLSDQSRFRV) are disordered.

Belongs to the ribonuclease III family. Homodimer. The cofactor is Mg(2+).

The protein resides in the cytoplasm. The enzyme catalyses Endonucleolytic cleavage to 5'-phosphomonoester.. In terms of biological role, digests double-stranded RNA. Involved in the processing of primary rRNA transcript to yield the immediate precursors to the large and small rRNAs (23S and 16S). Processes some mRNAs, and tRNAs when they are encoded in the rRNA operon. Processes pre-crRNA and tracrRNA of type II CRISPR loci if present in the organism. This is Ribonuclease 3 from Methylococcus capsulatus (strain ATCC 33009 / NCIMB 11132 / Bath).